A 139-amino-acid polypeptide reads, in one-letter code: GSK3-beta interaction protein (139 aa).

A disordered region spans residues 1-22 (METDCNPMELSSMSGFEEGSEL). The tract at residues 41–45 (VNDVL) is required for PRKAR2A interaction; contributes to a protective effect against H(2)O(2)-induced apoptosis. Residues 115 to 139 (SPAYREAFGNALLQRLEALKRDGQS) are interaction with GSK3B and acts as a GSK3B inhibitor.

This sequence belongs to the GSKIP family. As to quaternary structure, forms a complex composed of PRKAR2A or PRKAR2B, GSK3B and GSKIP through GSKIP interaction; facilitates PKA-induced phosphorylation of GSK3B leading to GSK3B inactivation; recruits DNM1L through GSK3B for PKA-mediated phosphorylation of DNM1L; promotes beta-catenin degradation through GSK3B-induced phosphorylation of beta-catenin; stabilizes beta-catenin and enhances Wnt-induced signaling through PKA-induced phosphorylation of beta-catenin. Interacts with GSK3B; induces GSK3B-mediated phosphorylation of GSKIP and inhibits GSK3B kinase activity. Post-translationally, phosphorylated by GSK3B.

It localises to the cytoplasm. The protein resides in the nucleus. Its function is as follows. A-kinase anchoring protein for GSK3B and PKA that regulates or facilitates their kinase activity towards their targets. The ternary complex enhances Wnt-induced signaling by facilitating the GSK3B- and PKA-induced phosphorylation of beta-catenin leading to beta-catenin degradation and stabilization respectively. Upon cAMP activation, the ternary complex contributes to neuroprotection against oxidative stress-induced apoptosis by facilitating the PKA-induced phosphorylation of DML1 and PKA-induced inactivation of GSK3B. During neurite outgrowth promotes neuron proliferation; while increases beta-catenin-induced transcriptional activity through GSK3B kinase activity inhibition, reduces N-cadherin level to promote cell cycle progression. May play a role in cleft palate formation and is required for postnatal life through modulation of the activity of GSK3B during development. The chain is GSK3-beta interaction protein from Macaca fascicularis (Crab-eating macaque).